Reading from the N-terminus, the 269-residue chain is 3-methyl-2-oxobutanoate hydroxymethyltransferase (269 aa).

Mg(2+)-binding residues include D50 and D89. 3-methyl-2-oxobutanoate-binding positions include 50–51, D89, and K118; that span reads DS. Mg(2+) is bound at residue E120. Residue E187 is the Proton acceptor of the active site.

The protein belongs to the PanB family. Homodecamer; pentamer of dimers. Mg(2+) serves as cofactor.

The protein resides in the cytoplasm. The catalysed reaction is 3-methyl-2-oxobutanoate + (6R)-5,10-methylene-5,6,7,8-tetrahydrofolate + H2O = 2-dehydropantoate + (6S)-5,6,7,8-tetrahydrofolate. It functions in the pathway cofactor biosynthesis; (R)-pantothenate biosynthesis; (R)-pantoate from 3-methyl-2-oxobutanoate: step 1/2. In terms of biological role, catalyzes the reversible reaction in which hydroxymethyl group from 5,10-methylenetetrahydrofolate is transferred onto alpha-ketoisovalerate to form ketopantoate. The chain is 3-methyl-2-oxobutanoate hydroxymethyltransferase from Nitrosomonas eutropha (strain DSM 101675 / C91 / Nm57).